Consider the following 842-residue polypeptide: Serine/threonine-protein phosphatase 4 regulatory subunit 3 (842 aa).

Regulatory subunit 3 (R3) of the histone H2A phosphatase complex (HTP-C) consisting of PPH3, PSY2 and PSY4.

The protein localises to the nucleus. Functionally, core regulatory subunit of the histone H2A phosphatase complex, which dephosphorylates H2AS128ph (gamma-H2A) that has been displaced from sites of DNA lesions in the double-stranded DNA break repair process. Dephosphorylation is necessary for efficient recovery from the DNA damage checkpoint. This chain is Serine/threonine-protein phosphatase 4 regulatory subunit 3 (PSY2), found in Candida glabrata (strain ATCC 2001 / BCRC 20586 / JCM 3761 / NBRC 0622 / NRRL Y-65 / CBS 138) (Yeast).